The primary structure comprises 284 residues: Cell division protein FtsQ (284 aa).

Over 1 to 31 (MAQLPASMRRKRAAITSIHDKPPTRKQKLAN) the chain is Cytoplasmic. Residues 32 to 52 (AGGWVLLVIAFVVLAVGIYGL) form a helical membrane-spanning segment. The Periplasmic portion of the chain corresponds to 53–284 (YKVITDATVA…SIAGGTKAKP (232 aa)). The region spanning 59-128 (ATVAKLEVVG…NGIRVRVMPR (70 aa)) is the POTRA domain.

Belongs to the FtsQ/DivIB family. FtsQ subfamily. As to quaternary structure, part of a complex composed of FtsB, FtsL and FtsQ.

It localises to the cell inner membrane. Its function is as follows. Essential cell division protein. May link together the upstream cell division proteins, which are predominantly cytoplasmic, with the downstream cell division proteins, which are predominantly periplasmic. May control correct divisome assembly. This Acinetobacter oleivorans (strain JCM 16667 / KCTC 23045 / DR1) protein is Cell division protein FtsQ.